The following is a 699-amino-acid chain: DNA ligase (699 aa).

The interval 1-29 (MSDADVDAESNPYLRDPPTEFEPAESLSR) is disordered. Residues 60–64 (DAAYD), 108–109 (SI), and Glu-137 each bind NAD(+). Lys-139 (N6-AMP-lysine intermediate) is an active-site residue. NAD(+) contacts are provided by Arg-160, Glu-196, Lys-311, and Lys-335. Positions 425, 428, 441, and 447 each coordinate Zn(2+). A BRCT domain is found at 613-666 (SGGDELDGLTFVVTGTLAASRSDVTELVESHGGNVTGSVSGNTDYLVVGENPGR).

Belongs to the NAD-dependent DNA ligase family. LigA subfamily. The cofactor is Mg(2+). Mn(2+) serves as cofactor.

It catalyses the reaction NAD(+) + (deoxyribonucleotide)n-3'-hydroxyl + 5'-phospho-(deoxyribonucleotide)m = (deoxyribonucleotide)n+m + AMP + beta-nicotinamide D-nucleotide.. Its activity is regulated as follows. Displays maximal in vitro activity at high salt levels. DNA ligase that catalyzes the formation of phosphodiester linkages between 5'-phosphoryl and 3'-hydroxyl groups in double-stranded DNA using NAD as a coenzyme and as the energy source for the reaction. It is essential for DNA replication and repair of damaged DNA. This chain is DNA ligase, found in Haloferax volcanii (strain ATCC 29605 / DSM 3757 / JCM 8879 / NBRC 14742 / NCIMB 2012 / VKM B-1768 / DS2) (Halobacterium volcanii).